Here is a 227-residue protein sequence, read N- to C-terminus: MAYPFQLGLXDATSPIMEELLHFHDHTLMIVFLISSLVLYIITLMLTTKLTHTSTMDAQEVETVWTILPAIILILIALPSLRILYMMDEINNPSLTVKTMGHQWYWSYEYTDYEDLNFDSYMIPTQELKPGELRLLEVDNRVVLPMEMTVRMLISSEDVLHSWAVPSLGLKTDAIPGRLNQTTLMAMRPGLYYGQCSEICGSNHSFMPIVLEMVPLSYFETWSAVMV.

Over 1–14 the chain is Mitochondrial intermembrane; it reads MAYPFQLGLXDATS. Residues 15–45 traverse the membrane as a helical segment; that stretch reads PIMEELLHFHDHTLMIVFLISSLVLYIITLM. The Mitochondrial matrix segment spans residues 46-59; the sequence is LTTKLTHTSTMDAQ. Residues 60–87 form a helical membrane-spanning segment; that stretch reads EVETVWTILPAIILILIALPSLRILYMM. The Mitochondrial intermembrane portion of the chain corresponds to 88–227; sequence DEINNPSLTV…YFETWSAVMV (140 aa). Residues His161, Cys196, Glu198, Cys200, His204, and Met207 each coordinate Cu cation. Glu198 is a binding site for Mg(2+).

This sequence belongs to the cytochrome c oxidase subunit 2 family. As to quaternary structure, component of the cytochrome c oxidase (complex IV, CIV), a multisubunit enzyme composed of 14 subunits. The complex is composed of a catalytic core of 3 subunits MT-CO1, MT-CO2 and MT-CO3, encoded in the mitochondrial DNA, and 11 supernumerary subunits COX4I, COX5A, COX5B, COX6A, COX6B, COX6C, COX7A, COX7B, COX7C, COX8 and NDUFA4, which are encoded in the nuclear genome. The complex exists as a monomer or a dimer and forms supercomplexes (SCs) in the inner mitochondrial membrane with NADH-ubiquinone oxidoreductase (complex I, CI) and ubiquinol-cytochrome c oxidoreductase (cytochrome b-c1 complex, complex III, CIII), resulting in different assemblies (supercomplex SCI(1)III(2)IV(1) and megacomplex MCI(2)III(2)IV(2)). Found in a complex with TMEM177, COA6, COX18, COX20, SCO1 and SCO2. Interacts with TMEM177 in a COX20-dependent manner. Interacts with COX20. Interacts with COX16. Requires Cu cation as cofactor.

The protein resides in the mitochondrion inner membrane. It catalyses the reaction 4 Fe(II)-[cytochrome c] + O2 + 8 H(+)(in) = 4 Fe(III)-[cytochrome c] + 2 H2O + 4 H(+)(out). Component of the cytochrome c oxidase, the last enzyme in the mitochondrial electron transport chain which drives oxidative phosphorylation. The respiratory chain contains 3 multisubunit complexes succinate dehydrogenase (complex II, CII), ubiquinol-cytochrome c oxidoreductase (cytochrome b-c1 complex, complex III, CIII) and cytochrome c oxidase (complex IV, CIV), that cooperate to transfer electrons derived from NADH and succinate to molecular oxygen, creating an electrochemical gradient over the inner membrane that drives transmembrane transport and the ATP synthase. Cytochrome c oxidase is the component of the respiratory chain that catalyzes the reduction of oxygen to water. Electrons originating from reduced cytochrome c in the intermembrane space (IMS) are transferred via the dinuclear copper A center (CU(A)) of subunit 2 and heme A of subunit 1 to the active site in subunit 1, a binuclear center (BNC) formed by heme A3 and copper B (CU(B)). The BNC reduces molecular oxygen to 2 water molecules using 4 electrons from cytochrome c in the IMS and 4 protons from the mitochondrial matrix. The sequence is that of Cytochrome c oxidase subunit 2 (MT-CO2) from Vulpes corsac (Corsac fox).